The primary structure comprises 89 residues: MSLTLVLFLIGILGFVFNRKNIILMLISIEIMLLSITFLILVSSINLDDIIGQTYAIYIIVVAGAESAIGLAILVAFYRLRGSIAIEYK.

3 helical membrane-spanning segments follow: residues 1-21 (MSLTLVLFLIGILGFVFNRKN), 22-42 (IILMLISIEIMLLSITFLILV), and 57-77 (IYIIVVAGAESAIGLAILVAF).

This sequence belongs to the complex I subunit 4L family.

Its subcellular location is the mitochondrion membrane. The enzyme catalyses a ubiquinone + NADH + 5 H(+)(in) = a ubiquinol + NAD(+) + 4 H(+)(out). Functionally, core subunit of the mitochondrial membrane respiratory chain NADH dehydrogenase (Complex I) that is believed to belong to the minimal assembly required for catalysis. Complex I functions in the transfer of electrons from NADH to the respiratory chain. The immediate electron acceptor for the enzyme is believed to be ubiquinone. The chain is NADH-ubiquinone oxidoreductase chain 4L (ND4L) from Hypocrea jecorina (Trichoderma reesei).